Reading from the N-terminus, the 869-residue chain is Iron-sulfur cluster assembly SufBD family protein ML0593 (869 aa).

The region spanning 344–477 is the DOD-type homing endonuclease domain; the sequence is LLGLWLGDGH…VRQLAIGCGL (134 aa).

This sequence belongs to the iron-sulfur cluster assembly SufBD family. This protein undergoes a protein self splicing that involves a post-translational excision of the intervening region (intein) followed by peptide ligation.

In Mycobacterium leprae (strain TN), this protein is Iron-sulfur cluster assembly SufBD family protein ML0593.